A 522-amino-acid polypeptide reads, in one-letter code: Peptide chain release factor 3 (522 aa).

A tr-type G domain is found at 10-277 (ASRKTFAIIS…TFVDFAPSPS (268 aa)). Residues 19–26 (SHPDAGKT), 87–91 (DTPGH), and 141–144 (NKMD) each bind GTP.

Belongs to the TRAFAC class translation factor GTPase superfamily. Classic translation factor GTPase family. PrfC subfamily.

The protein localises to the cytoplasm. Its function is as follows. Increases the formation of ribosomal termination complexes and stimulates activities of RF-1 and RF-2. It binds guanine nucleotides and has strong preference for UGA stop codons. It may interact directly with the ribosome. The stimulation of RF-1 and RF-2 is significantly reduced by GTP and GDP, but not by GMP. The sequence is that of Peptide chain release factor 3 from Listeria monocytogenes serotype 4b (strain F2365).